The chain runs to 580 residues: Small conductance calcium-activated potassium channel protein 2 (580 aa).

2 disordered regions span residues 1–68 (MSSC…VSKP) and 88–116 (GGGGGGGGGGGGSGHGSSSGTKSSKKKNQ). Low complexity predominate over residues 48–61 (SSPSAAAAASSSAP). Over residues 88–104 (GGGGGGGGGGGGSGHGS) the composition is skewed to gly residues. A helical membrane pass occupies residues 140–160 (LIFGMFGIVVMVIETELSWGA). Tyr-161 carries the post-translational modification Phosphotyrosine. Residues 169 to 189 (LALKCLISLSTIILLGLIIVY) form a helical membrane-spanning segment. The chain crosses the membrane as a helical span at residues 215-235 (IFFICLEILVCAIHPIPGNYT). The helical transmembrane segment at 257–277 (IILSIPMFLRLYLIARVMLLH) threads the bilayer. Residues 306 to 326 (LMTICPGTVLLVFSISLWIIA) traverse the membrane as a helical segment. Positions 346-366 (FLGAMWLISITFLSIGYGDMV) form an intramembrane region, pore-forming. The chain crosses the membrane as a helical span at residues 375–395 (VCLLTGIMGAGCTALVVAVVA). The interval 413-489 (DTQLTKRVKN…LVDLAKTQNI (77 aa)) is calmodulin-binding. Positions 551–560 (HVTYNAERSR) are enriched in basic and acidic residues. Residues 551–580 (HVTYNAERSRSSSRRRRSSSTAPPTSSESS) are disordered. The span at 569-580 (SSTAPPTSSESS) shows a compositional bias: low complexity.

It belongs to the potassium channel KCNN family. KCa2.2/KCNN2 subfamily. As to quaternary structure, homodimer. Heteromultimer with KCNN1 and KCNN3. The complex is composed of 4 channel subunits each of which binds to a calmodulin subunit which regulates the channel activity through calcium-binding. Interacts (via N-terminal domain) with MPP2. As to expression, brain.

It localises to the membrane. It is found in the cytoplasm. The protein resides in the myofibril. Its subcellular location is the sarcomere. The protein localises to the z line. It carries out the reaction K(+)(in) = K(+)(out). Its activity is regulated as follows. Inhibited by bee venom neurotoxin apamin. Inhibited by UCL 1684 and tetraethylammonium (TEA). Small conductance calcium-activated potassium channel that mediates the voltage-independent transmembrane transfer of potassium across the cell membrane through a constitutive interaction with calmodulin which binds the intracellular calcium allowing its opening. The current is characterized by a voltage-independent activation, an intracellular calcium concentration increase-dependent activation and a single-channel conductance of about 3 picosiemens. Also presents an inwardly rectifying current, thus reducing its already small outward conductance of potassium ions, which is particularly the case when the membrane potential displays positive values, above + 20 mV. The inward rectification could be due to a blockade of the outward current by intracellular divalent cations such as calcium and magnesium and could also be due to an intrinsic property of the channel pore, independent of intracellular divalent ions. There are three positively charged amino acids in the S6 transmembrane domain, close to the pore, that collectively control the conductance and rectification through an electrostatic mechanism. Additionally, electrostatic contributions from these residues also play an important role in determining the intrinsic open probability of the channel in the absence of calcium, affecting the apparent calcium affinity for activation. Forms an heteromeric complex with calmodulin, which is constitutively associated in a calcium-independent manner. Channel opening is triggered when calcium binds the calmodulin resulting in a rotary movement leading to the formation of the dimeric complex to open the gate. Plays a role in the repolarization phase of cardiac action potential. The protein is Small conductance calcium-activated potassium channel protein 2 of Rattus norvegicus (Rat).